Here is a 104-residue protein sequence, read N- to C-terminus: Ig kappa chain V region XP-1 (104 aa).

The segment at 1–24 is framework-1; it reads ADIVMTQTPASVSEPVGGTVTIKC. The complementarity-determining-1 stretch occupies residues 25–35; sequence QASQSIFBBLA. Residues 36-49 form a framework-2 region; sequence WYQKPGZPPKGLLY. The complementarity-determining-2 stretch occupies residues 50–56; sequence TBYTLAS. Residues 57–88 form a framework-3 region; it reads GVSSRFSGGGSGTBFTLTISDLECABAATYYC. A complementarity-determining-3 region spans residues 89–100; sequence EXTGVSZBXBKG. The framework-4 stretch occupies residues 101-104; the sequence is FGGG.

This chain is Ig kappa chain V region XP-1, found in Oryctolagus cuniculus (Rabbit).